The primary structure comprises 127 residues: Fluoride-specific ion channel FluC (127 aa).

The next 4 helical transmembrane spans lie at 8-28 (LLIA…QYWF), 37-57 (PWGT…VYAI), 68-88 (WKFL…TFSY), and 100-120 (ILFL…AFAG). The Na(+) site is built by Gly78 and Thr81.

Belongs to the fluoride channel Fluc/FEX (TC 1.A.43) family.

It is found in the cell inner membrane. The catalysed reaction is fluoride(in) = fluoride(out). Its activity is regulated as follows. Na(+) is not transported, but it plays an essential structural role and its presence is essential for fluoride channel function. Fluoride-specific ion channel. Important for reducing fluoride concentration in the cell, thus reducing its toxicity. This chain is Fluoride-specific ion channel FluC, found in Leptospira interrogans serogroup Icterohaemorrhagiae serovar Lai (strain 56601).